Reading from the N-terminus, the 32-residue chain is Trypsin inhibitor 2b (32 aa).

Intrachain disulfides connect cysteine 3/cysteine 20, cysteine 10/cysteine 22, and cysteine 16/cysteine 29.

This sequence belongs to the protease inhibitor I7 (squash-type serine protease inhibitor) family.

It localises to the secreted. In terms of biological role, inhibits trypsin. The chain is Trypsin inhibitor 2b from Cucumis sativus (Cucumber).